The sequence spans 440 residues: Chromosome partition protein MukF (440 aa).

Positions L208–I236 are leucine-zipper.

Belongs to the MukF family. Interacts, and probably forms a ternary complex, with MukE and MukB via its C-terminal region. The complex formation is stimulated by calcium or magnesium. It is required for an interaction between MukE and MukB.

The protein localises to the cytoplasm. It localises to the nucleoid. In terms of biological role, involved in chromosome condensation, segregation and cell cycle progression. May participate in facilitating chromosome segregation by condensation DNA from both sides of a centrally located replisome during cell division. Not required for mini-F plasmid partitioning. Probably acts via its interaction with MukB and MukE. Overexpression results in anucleate cells. It has a calcium binding activity. The polypeptide is Chromosome partition protein MukF (Klebsiella pneumoniae subsp. pneumoniae (strain ATCC 700721 / MGH 78578)).